The chain runs to 360 residues: Cysteine proteinase 2 (360 aa).

The first 19 residues, 1–19 (MVPRRLFVLAVVVLADTAA), serve as a signal peptide directing secretion. Residues 20 to 142 (VVNSGFADSN…NHRMRAAAVA (123 aa)) constitute a propeptide, activation peptide. A glycan (N-linked (GlcNAc...) asparagine) is linked at N125. Cystine bridges form between C164/C207 and C198/C240. Residue C167 is part of the active site. Residue N256 is glycosylated (N-linked (GlcNAc...) asparagine). A disulfide bridge connects residues C298 and C348. Residues H307 and N327 contribute to the active site.

Belongs to the peptidase C1 family. Expressed at the onset of germination.

Its subcellular location is the vacuole. Functionally, involved in the degradation of the storage protein zein. May play a role in proteolysis during emergencies. The protein is Cysteine proteinase 2 (CCP2) of Zea mays (Maize).